A 120-amino-acid polypeptide reads, in one-letter code: Large ribosomal subunit protein uL22 (120 aa).

The segment at 1-25 (MFVNKKYTAKGKNLPSSPKKVRPIA) is disordered.

It belongs to the universal ribosomal protein uL22 family. As to quaternary structure, part of the 50S ribosomal subunit.

Its function is as follows. This protein binds specifically to 23S rRNA; its binding is stimulated by other ribosomal proteins, e.g. L4, L17, and L20. It is important during the early stages of 50S assembly. It makes multiple contacts with different domains of the 23S rRNA in the assembled 50S subunit and ribosome. The globular domain of the protein is located near the polypeptide exit tunnel on the outside of the subunit, while an extended beta-hairpin is found that lines the wall of the exit tunnel in the center of the 70S ribosome. The polypeptide is Large ribosomal subunit protein uL22 (Borrelia duttonii (strain Ly)).